The primary structure comprises 424 residues: Riboflavin biosynthesis protein RibBA (424 aa).

Positions 1–206 (MVTCEAGIAS…VDDLITYRWT (206 aa)) are DHBP synthase. D-ribulose 5-phosphate contacts are provided by residues 32 to 33 (RE), aspartate 37, 145 to 149 (RPGHT), and glutamate 169. Mg(2+) is bound at residue glutamate 33. Mg(2+) is bound at residue histidine 148. Positions 207-424 (FDSLVEHVSS…YETVERTSCC (218 aa)) are GTP cyclohydrolase II. 257-261 (RVHSE) is a GTP binding site. Zn(2+)-binding residues include cysteine 262, cysteine 273, and cysteine 275. GTP is bound by residues glutamine 278, 301-303 (EGR), and threonine 323. The active-site Proton acceptor; for GTP cyclohydrolase activity is aspartate 335. The active-site Nucleophile; for GTP cyclohydrolase activity is the arginine 337. GTP-binding residues include threonine 358 and lysine 363.

The protein in the N-terminal section; belongs to the DHBP synthase family. This sequence in the C-terminal section; belongs to the GTP cyclohydrolase II family. It depends on Mg(2+) as a cofactor. The cofactor is Mn(2+). Zn(2+) is required as a cofactor.

It carries out the reaction D-ribulose 5-phosphate = (2S)-2-hydroxy-3-oxobutyl phosphate + formate + H(+). The enzyme catalyses GTP + 4 H2O = 2,5-diamino-6-hydroxy-4-(5-phosphoribosylamino)-pyrimidine + formate + 2 phosphate + 3 H(+). Its pathway is cofactor biosynthesis; riboflavin biosynthesis; 2-hydroxy-3-oxobutyl phosphate from D-ribulose 5-phosphate: step 1/1. It participates in cofactor biosynthesis; riboflavin biosynthesis; 5-amino-6-(D-ribitylamino)uracil from GTP: step 1/4. Its function is as follows. Catalyzes the conversion of D-ribulose 5-phosphate to formate and 3,4-dihydroxy-2-butanone 4-phosphate. Catalyzes the conversion of GTP to 2,5-diamino-6-ribosylamino-4(3H)-pyrimidinone 5'-phosphate (DARP), formate and pyrophosphate. The sequence is that of Riboflavin biosynthesis protein RibBA from Chlamydia muridarum (strain MoPn / Nigg).